Consider the following 630-residue polypeptide: Succinate dehydrogenase [ubiquinone] flavoprotein subunit, mitochondrial (630 aa).

The N-terminal 31 residues, Met-1–Leu-31, are a transit peptide targeting the mitochondrion. FAD is bound by residues Gly-52–Gly-57, Thr-75–Gly-90, and Asp-260. Tele-8alpha-FAD histidine is present on His-83. His-281 and Thr-293 together coordinate substrate. Arg-325 serves as the catalytic Proton acceptor. A substrate-binding site is contributed by His-392. Glu-426 serves as a coordination point for FAD. Residue Arg-437 coordinates substrate. Ser-442–Leu-443 contacts FAD.

Belongs to the FAD-dependent oxidoreductase 2 family. FRD/SDH subfamily. In terms of assembly, component of complex II composed of eight subunits in plants: four classical SDH subunits SDH1, SDH2, SDH3 and SDH4 (a flavoprotein (FP), an iron-sulfur protein (IP), and a cytochrome b composed of a large and a small subunit.), as well as four subunits unknown in mitochondria from bacteria and heterotrophic eukaryotes. The cofactor is FAD.

Its subcellular location is the mitochondrion inner membrane. It catalyses the reaction a quinone + succinate = fumarate + a quinol. Its pathway is carbohydrate metabolism; tricarboxylic acid cycle; fumarate from succinate (eukaryal route): step 1/1. Its function is as follows. Flavoprotein (FP) subunit of succinate dehydrogenase (SDH) that is involved in complex II of the mitochondrial electron transport chain and is responsible for transferring electrons from succinate to ubiquinone (coenzyme Q). The protein is Succinate dehydrogenase [ubiquinone] flavoprotein subunit, mitochondrial (SDH1) of Oryza sativa subsp. japonica (Rice).